A 180-amino-acid chain; its full sequence is Large ribosomal subunit protein uL6 (180 aa).

This sequence belongs to the universal ribosomal protein uL6 family. Part of the 50S ribosomal subunit.

Its function is as follows. This protein binds to the 23S rRNA, and is important in its secondary structure. It is located near the subunit interface in the base of the L7/L12 stalk, and near the tRNA binding site of the peptidyltransferase center. The sequence is that of Large ribosomal subunit protein uL6 from Mycoplasma capricolum subsp. capricolum (strain California kid / ATCC 27343 / NCTC 10154).